The sequence spans 674 residues: Death-associated protein kinase related (674 aa).

One can recognise a Protein kinase domain in the interval 37 to 295 (EVEQTPFARG…ATGCLDHIWL (259 aa)). Residues 43–51 (FARGKFAAV) and K66 contribute to the ATP site. Residue D160 is the Proton acceptor of the active site. Disordered regions lie at residues 308-388 (QPQS…GGSI), 412-440 (TLTS…SDKE), 511-583 (DSSG…TSGS), and 614-650 (TSSA…HHHV). Residues 312–343 (DAEEEEEEDVDDDVEDEEEEEQVEEEEEETQN) are compositionally biased toward acidic residues. Over residues 352-363 (PQQQQQPVQQHQ) the composition is skewed to low complexity. Residues 373–382 (KPTHNGHHRA) show a composition bias toward basic residues. A phosphoserine mark is found at S384, S387, S435, S437, and S521. Residues 512-525 (SSGSAVARRSGGAV) are compositionally biased toward low complexity. 2 stretches are compositionally biased toward polar residues: residues 526-541 (TSSS…SVRL) and 555-564 (YKKQTSQNGC). Composition is skewed to low complexity over residues 565–583 (SSTS…TSGS) and 614–631 (TSSA…TSAA). Residues 632 to 650 (HHLHHHHMHHHHHHHHHHV) show a composition bias toward basic residues.

The protein belongs to the protein kinase superfamily. Ser/Thr protein kinase family.

It catalyses the reaction L-seryl-[protein] + ATP = O-phospho-L-seryl-[protein] + ADP + H(+). The enzyme catalyses L-threonyl-[protein] + ATP = O-phospho-L-threonyl-[protein] + ADP + H(+). The protein is Death-associated protein kinase related (Drak) of Drosophila melanogaster (Fruit fly).